A 201-amino-acid polypeptide reads, in one-letter code: Anthranilate synthase component II (201 aa).

The region spanning 3-196 (DILLLDNIDS…LAWAQRKLEP (194 aa)) is the Glutamine amidotransferase type-1 domain. Residue 57 to 59 (GPG) coordinates L-glutamine. The active-site Nucleophile; for GATase activity is the C84. Residues Q88 and 134–135 (SL) each bind L-glutamine. Residues H170 and E172 each act as for GATase activity in the active site.

Tetramer of two components I and two components II.

The catalysed reaction is chorismate + L-glutamine = anthranilate + pyruvate + L-glutamate + H(+). It carries out the reaction N-(5-phospho-beta-D-ribosyl)anthranilate + diphosphate = 5-phospho-alpha-D-ribose 1-diphosphate + anthranilate. Its pathway is amino-acid biosynthesis; L-tryptophan biosynthesis; L-tryptophan from chorismate: step 1/5. It participates in amino-acid biosynthesis; L-tryptophan biosynthesis; L-tryptophan from chorismate: step 2/5. The sequence is that of Anthranilate synthase component II (trpG-TRPD) from Shigella dysenteriae.